A 141-amino-acid chain; its full sequence is Hemoglobin subunit alpha-3 (141 aa).

One can recognise a Globin domain in the interval 1–141 (VLSPADKTNV…VSTVLTSKYR (141 aa)). O2 is bound at residue H58. H87 lines the heme b pocket.

It belongs to the globin family. In terms of assembly, heterotetramer of two alpha chains and two beta chains. In terms of tissue distribution, red blood cells.

Involved in oxygen transport from the lung to the various peripheral tissues. The polypeptide is Hemoglobin subunit alpha-3 (Gorilla gorilla gorilla (Western lowland gorilla)).